Consider the following 525-residue polypeptide: Glutamate--cysteine ligase (525 aa).

Belongs to the glutamate--cysteine ligase type 1 family. Type 1 subfamily.

It catalyses the reaction L-cysteine + L-glutamate + ATP = gamma-L-glutamyl-L-cysteine + ADP + phosphate + H(+). It functions in the pathway sulfur metabolism; glutathione biosynthesis; glutathione from L-cysteine and L-glutamate: step 1/2. The sequence is that of Glutamate--cysteine ligase from Pseudomonas putida (strain W619).